Here is a 422-residue protein sequence, read N- to C-terminus: Histidine--tRNA ligase (422 aa).

The protein belongs to the class-II aminoacyl-tRNA synthetase family. In terms of assembly, homodimer.

The protein localises to the cytoplasm. The enzyme catalyses tRNA(His) + L-histidine + ATP = L-histidyl-tRNA(His) + AMP + diphosphate + H(+). The protein is Histidine--tRNA ligase of Vesicomyosocius okutanii subsp. Calyptogena okutanii (strain HA).